Reading from the N-terminus, the 152-residue chain is Xanthine-guanine phosphoribosyltransferase (152 aa).

5-phospho-alpha-D-ribose 1-diphosphate is bound by residues 37–38, Arg69, and 88–96; these read RG and DDLVDTGGT. Arg69 provides a ligand contact to GMP. A Mg(2+)-binding site is contributed by Asp89. Positions 92 and 135 each coordinate guanine. Xanthine is bound by residues Asp92 and Ile135. GMP contacts are provided by residues 92–96 and 134–135; these read DTGGT and WI.

It belongs to the purine/pyrimidine phosphoribosyltransferase family. XGPT subfamily. As to quaternary structure, homotetramer. Mg(2+) is required as a cofactor.

It localises to the cell inner membrane. The enzyme catalyses GMP + diphosphate = guanine + 5-phospho-alpha-D-ribose 1-diphosphate. It carries out the reaction XMP + diphosphate = xanthine + 5-phospho-alpha-D-ribose 1-diphosphate. The catalysed reaction is IMP + diphosphate = hypoxanthine + 5-phospho-alpha-D-ribose 1-diphosphate. The protein operates within purine metabolism; GMP biosynthesis via salvage pathway; GMP from guanine: step 1/1. It functions in the pathway purine metabolism; XMP biosynthesis via salvage pathway; XMP from xanthine: step 1/1. Functionally, purine salvage pathway enzyme that catalyzes the transfer of the ribosyl-5-phosphate group from 5-phospho-alpha-D-ribose 1-diphosphate (PRPP) to the N9 position of the 6-oxopurines guanine and xanthine to form the corresponding ribonucleotides GMP (guanosine 5'-monophosphate) and XMP (xanthosine 5'-monophosphate), with the release of PPi. To a lesser extent, also acts on hypoxanthine. The chain is Xanthine-guanine phosphoribosyltransferase from Serratia proteamaculans (strain 568).